Reading from the N-terminus, the 210-residue chain is Amelogenin, X isoform (210 aa).

Residues 1–16 (MGTWILFACLLGAAFA) form the signal peptide. Ser-32 is subject to Phosphoserine. Composition is skewed to low complexity over residues 109-119 (VAPQQPMMPVP) and 136-169 (PSAQ…HPMQ). Residues 109–187 (VAPQQPMMPV…PPLFSMQPLS (79 aa)) are disordered. The segment covering 170 to 179 (PLAPQPPLPP) has biased composition (pro residues).

This sequence belongs to the amelogenin family. In terms of assembly, interacts with KRT5. Post-translationally, several forms are produced by C-terminal processing. Phosphorylated by FAM20C in vitro.

The protein resides in the secreted. Its subcellular location is the extracellular space. It localises to the extracellular matrix. In terms of biological role, plays a role in the biomineralization of teeth. Seems to regulate the formation of crystallites during the secretory stage of tooth enamel development. Thought to play a major role in the structural organization and mineralization of developing enamel. This is Amelogenin, X isoform (Amelx) from Mus musculus (Mouse).